The primary structure comprises 331 residues: Glyceraldehyde-3-phosphate dehydrogenase (331 aa).

NAD(+)-binding positions include 12 to 13 (RI), Asp-34, Arg-78, and Thr-120. Residues 149 to 151 (SCT), Thr-180, 209 to 210 (TG), and Arg-232 each bind D-glyceraldehyde 3-phosphate. Residue Cys-150 is the Nucleophile of the active site. NAD(+) is bound at residue Asn-314.

This sequence belongs to the glyceraldehyde-3-phosphate dehydrogenase family. As to quaternary structure, homotetramer.

It is found in the cytoplasm. It carries out the reaction D-glyceraldehyde 3-phosphate + phosphate + NAD(+) = (2R)-3-phospho-glyceroyl phosphate + NADH + H(+). The protein operates within carbohydrate degradation; glycolysis; pyruvate from D-glyceraldehyde 3-phosphate: step 1/5. Functionally, catalyzes the oxidative phosphorylation of glyceraldehyde 3-phosphate (G3P) to 1,3-bisphosphoglycerate (BPG) using the cofactor NAD. The first reaction step involves the formation of a hemiacetal intermediate between G3P and a cysteine residue, and this hemiacetal intermediate is then oxidized to a thioester, with concomitant reduction of NAD to NADH. The reduced NADH is then exchanged with the second NAD, and the thioester is attacked by a nucleophilic inorganic phosphate to produce BPG. This chain is Glyceraldehyde-3-phosphate dehydrogenase (gapA), found in Shimwellia blattae (strain ATCC 29907 / DSM 4481 / JCM 1650 / NBRC 105725 / CDC 9005-74) (Escherichia blattae).